The chain runs to 331 residues: 2-keto-3-deoxygluconate permease (331 aa).

The next 10 membrane-spanning stretches (helical) occupy residues 10–30, 42–62, 77–97, 100–120, 141–161, 163–183, 200–220, 224–244, 254–274, and 289–309; these read IPGG…TLAP, GMIS…GASI, LVLT…MFIP, GIQT…AMDM, AFVL…LGSA, LASF…IGFA, PVLI…NVIM, LLGI…LIIA, TAGV…MIIA, and ALVA…TALY.

This sequence belongs to the KdgT transporter family.

It localises to the cell inner membrane. It carries out the reaction 2-dehydro-3-deoxy-D-gluconate(in) + H(+)(in) = 2-dehydro-3-deoxy-D-gluconate(out) + H(+)(out). In terms of biological role, catalyzes the proton-dependent uptake of 2-keto-3-deoxygluconate (KDG) into the cell. The chain is 2-keto-3-deoxygluconate permease from Enterobacter sp. (strain 638).